A 361-amino-acid chain; its full sequence is GTP 3',8-cyclase (361 aa).

The interval 1–30 (MTVTALGLPTVARSTGDGSAGASPAPADGP) is disordered. Residues 16–30 (GDGSAGASPAPADGP) are compositionally biased toward low complexity. The 219-residue stretch at 34–252 (TYGRAATDLR…LQQHFELTPD (219 aa)) folds into the Radical SAM core domain. GTP is bound at residue Arg-43. Cys-50 and Cys-54 together coordinate [4Fe-4S] cluster. S-adenosyl-L-methionine is bound at residue Tyr-56. Cys-57 is a binding site for [4Fe-4S] cluster. Residue Arg-94 coordinates GTP. Residue Gly-98 participates in S-adenosyl-L-methionine binding. A GTP-binding site is contributed by Thr-125. Ser-149 is an S-adenosyl-L-methionine binding site. GTP is bound at residue Lys-186. S-adenosyl-L-methionine is bound at residue Met-220. Residues Cys-288 and Cys-291 each coordinate [4Fe-4S] cluster. GTP is bound at residue 293 to 295 (RTR). Residue Cys-305 participates in [4Fe-4S] cluster binding.

This sequence belongs to the radical SAM superfamily. MoaA family. In terms of assembly, monomer and homodimer. It depends on [4Fe-4S] cluster as a cofactor.

It catalyses the reaction GTP + AH2 + S-adenosyl-L-methionine = (8S)-3',8-cyclo-7,8-dihydroguanosine 5'-triphosphate + 5'-deoxyadenosine + L-methionine + A + H(+). Its pathway is cofactor biosynthesis; molybdopterin biosynthesis. Functionally, catalyzes the cyclization of GTP to (8S)-3',8-cyclo-7,8-dihydroguanosine 5'-triphosphate. The polypeptide is GTP 3',8-cyclase (Mycolicibacterium smegmatis (strain ATCC 700084 / mc(2)155) (Mycobacterium smegmatis)).